The chain runs to 416 residues: Glutamyl-tRNA reductase (416 aa).

Residues 49-52, Ser105, 110-112, and Gln116 each bind substrate; these read TCNR and EPQ. Catalysis depends on Cys50, which acts as the Nucleophile. 185 to 190 lines the NADP(+) pocket; that stretch reads GAGETI.

The protein belongs to the glutamyl-tRNA reductase family. In terms of assembly, homodimer.

The enzyme catalyses (S)-4-amino-5-oxopentanoate + tRNA(Glu) + NADP(+) = L-glutamyl-tRNA(Glu) + NADPH + H(+). It participates in porphyrin-containing compound metabolism; protoporphyrin-IX biosynthesis; 5-aminolevulinate from L-glutamyl-tRNA(Glu): step 1/2. Its function is as follows. Catalyzes the NADPH-dependent reduction of glutamyl-tRNA(Glu) to glutamate 1-semialdehyde (GSA). This chain is Glutamyl-tRNA reductase, found in Shewanella amazonensis (strain ATCC BAA-1098 / SB2B).